The following is a 514-amino-acid chain: Cytochrome P450 monooxygenase ptmQ (514 aa).

Residues 3-23 (YVAQSPWIATLIVTATTYCTL) traverse the membrane as a helical segment. N148 is a glycosylation site (N-linked (GlcNAc...) asparagine). Residue C452 participates in heme binding. N-linked (GlcNAc...) asparagine glycosylation occurs at N486.

Belongs to the cytochrome P450 family. Heme is required as a cofactor.

The protein resides in the membrane. It participates in secondary metabolite biosynthesis. Functionally, cytochrome P450 monooxygenase; part of the gene cluster that mediates the biosynthesis of the indole diterpenes penitrems. The geranylgeranyl diphosphate (GGPP) synthase ptmG catalyzes the first step in penitrem biosynthesis via conversion of farnesyl pyrophosphate and isopentyl pyrophosphate into geranylgeranyl pyrophosphate (GGPP). Condensation of indole-3-glycerol phosphate with GGPP by the prenyl transferase ptmC then forms 3-geranylgeranylindole (3-GGI). Epoxidation by the FAD-dependent monooxygenase ptmM leads to a epoxidized-GGI that is substrate of the terpene cyclase ptmB for cyclization to yield paspaline. Paspaline is subsequently converted to 13-desoxypaxilline by the cytochrome P450 monooxygenase ptmP, the latter being then converted to paxilline by the cytochrome P450 monooxygenase ptmQ. Paxilline is converted to beta-paxitriol via C-10 ketoreduction by the short-chain dehydrogenase ptmH which can be monoprenylated at the C-20 by the indole diterpene prenyltransferase ptmD. A two-step elimination (acetylation and elimination) process performed by the O-acetyltransferase ptmV and ptmI leads to the production of the prenylated form of penijanthine. The FAD-linked oxidoreductase ptmO then converts the prenylated form of penijanthine into PC-M5 which is in turn transformed into PC-M4 by the aromatic dimethylallyltransferase ptmE. Five sequential oxidative transformations performed by the cytochrome P450 monooxygenases ptmK, ptmU, ptmL, ptmN and ptmJ yield the various penitrem compounds. PtmK, ptmU and ptmM are involved in the formation of the key bicyclic ring of penitrem C via the formation of the intermediates secopenitrem D and penitrem D. PtmL catalyzes the epoxidation of penitrem D and C to yield penitrem B and F, respectively. PtmJ catalyzes the last benzylic hydroxylation to convert penitrem B to prenitrem E and penitrem F to penitrem A. The polypeptide is Cytochrome P450 monooxygenase ptmQ (Penicillium ochrochloron).